Here is a 425-residue protein sequence, read N- to C-terminus: G protein-activated inward rectifier potassium channel 2 (425 aa).

At 1–91 the chain is on the cytoplasmic side; the sequence is MTMAKLTESM…IFTTLVDLKW (91 aa). A phosphoserine mark is found at serine 18 and serine 25. The helical transmembrane segment at 92–116 threads the bilayer; it reads RFNLLIFVMVYTVTWLFFGMIWWLI. Topologically, residues 117-140 are extracellular; sequence AYIRGDMDHIEDPSWTPCVTNLNG. The helical; Pore-forming intramembrane region spans 141 to 152; it reads FVSAFLFSIETE. The segment at residues 153 to 159 is an intramembrane region (pore-forming); the sequence is TTIGYGY. The Selectivity filter motif lies at 154–159; sequence TIGYGY. At 160–168 the chain is on the extracellular side; that stretch reads RVITDKCPE. The chain crosses the membrane as a helical span at residues 169 to 190; the sequence is GIILLLIQSVLGSIVNAFMVGC. The Cytoplasmic portion of the chain corresponds to 191–425; the sequence is MFVKISQPKK…VANLENESKV (235 aa). Residues 392 to 425 form a disordered region; sequence NQHAELETEEEEKNPEELTERNGDVANLENESKV. The PDZ-binding signature appears at 422–425; it reads ESKV.

Belongs to the inward rectifier-type potassium channel (TC 1.A.2.1) family. KCNJ6 subfamily. Associates with KCNJ3/GIRK1 or KCNJ5/GRIK4 to form a G-protein-activated heteromultimer pore-forming unit. The resulting inward current is much larger. Interacts (via PDZ-binding motif) with SNX27 (via PDZ domain); the interaction is required for recycling to the plasma membrane when endocytosed and prevent degradation in lysosomes. As to expression, pancreatic beta cells and brain.

Its subcellular location is the membrane. The enzyme catalyses K(+)(in) = K(+)(out). Activated by phosphatidylinositol 4,5 biphosphate (PtdIns(4,5)P2). In terms of biological role, inward rectifier potassium channels are characterized by a greater tendency to allow potassium to flow into the cell rather than out of it. Their voltage dependence is regulated by the concentration of extracellular potassium; as external potassium is raised, the voltage range of the channel opening shifts to more positive voltages. The inward rectification is mainly due to the blockage of outward current by internal magnesium. This potassium channel may be involved in the regulation of insulin secretion by glucose and/or neurotransmitters acting through G-protein-coupled receptors. The polypeptide is G protein-activated inward rectifier potassium channel 2 (Kcnj6) (Rattus norvegicus (Rat)).